The primary structure comprises 665 residues: LisH domain-containing protein ARMC9 (665 aa).

Positions 7 to 39 constitute a LisH domain; the sequence is HESELLGLVKEYLDFAEFEDTLKTFSKECKIKG. Residues 201–235 are a coiled coil; that stretch reads ENGQSNKEMLQQLHQQLVEAERRSMTYLKRYNKIQ. A Phosphoserine modification is found at Ser-582. Residues 642–665 are disordered; it reads VQWSGDEPLQRPVTPGGHRNGYPV.

Interacts with TOGARAM1, CCDC66, CEP104, CSPP1 and CEP290. Interacts with NDUFAF2.

Its subcellular location is the cytoplasm. It is found in the cytoskeleton. The protein resides in the cilium basal body. The protein localises to the cell projection. It localises to the cilium. Its subcellular location is the microtubule organizing center. It is found in the centrosome. The protein resides in the centriole. Functionally, involved in ciliogenesis. It is required for appropriate acetylation and polyglutamylation of ciliary microtubules, and regulation of cilium length. Acts as a positive regulator of hedgehog (Hh)signaling. May participate in the trafficking and/or retention of GLI2 and GLI3 proteins at the ciliary tip. In Pongo abelii (Sumatran orangutan), this protein is LisH domain-containing protein ARMC9 (ARMC9).